The primary structure comprises 128 residues: Large ribosomal subunit protein bL19 (128 aa).

It belongs to the bacterial ribosomal protein bL19 family.

Functionally, this protein is located at the 30S-50S ribosomal subunit interface and may play a role in the structure and function of the aminoacyl-tRNA binding site. In Janthinobacterium sp. (strain Marseille) (Minibacterium massiliensis), this protein is Large ribosomal subunit protein bL19.